A 124-amino-acid polypeptide reads, in one-letter code: Large ribosomal subunit protein bL12 (124 aa).

It belongs to the bacterial ribosomal protein bL12 family. Homodimer. Part of the ribosomal stalk of the 50S ribosomal subunit. Forms a multimeric L10(L12)X complex, where L10 forms an elongated spine to which 2 to 4 L12 dimers bind in a sequential fashion. Binds GTP-bound translation factors.

Functionally, forms part of the ribosomal stalk which helps the ribosome interact with GTP-bound translation factors. Is thus essential for accurate translation. This Desulforamulus reducens (strain ATCC BAA-1160 / DSM 100696 / MI-1) (Desulfotomaculum reducens) protein is Large ribosomal subunit protein bL12.